The sequence spans 482 residues: tRNA sulfurtransferase (482 aa).

The region spanning 61 to 165 is the THUMP domain; sequence LAIRDALTRI…DDRLLLIKGR (105 aa). ATP-binding positions include 183–184, Lys-265, Gly-287, and Gln-296; that span reads LI. Cysteines 344 and 456 form a disulfide. One can recognise a Rhodanese domain in the interval 404 to 482; it reads FGANDVILDI…GFANVKVYRP (79 aa). Cys-456 (cysteine persulfide intermediate) is an active-site residue.

It belongs to the ThiI family.

It localises to the cytoplasm. It catalyses the reaction [ThiI sulfur-carrier protein]-S-sulfanyl-L-cysteine + a uridine in tRNA + 2 reduced [2Fe-2S]-[ferredoxin] + ATP + H(+) = [ThiI sulfur-carrier protein]-L-cysteine + a 4-thiouridine in tRNA + 2 oxidized [2Fe-2S]-[ferredoxin] + AMP + diphosphate. The catalysed reaction is [ThiS sulfur-carrier protein]-C-terminal Gly-Gly-AMP + S-sulfanyl-L-cysteinyl-[cysteine desulfurase] + AH2 = [ThiS sulfur-carrier protein]-C-terminal-Gly-aminoethanethioate + L-cysteinyl-[cysteine desulfurase] + A + AMP + 2 H(+). It functions in the pathway cofactor biosynthesis; thiamine diphosphate biosynthesis. Functionally, catalyzes the ATP-dependent transfer of a sulfur to tRNA to produce 4-thiouridine in position 8 of tRNAs, which functions as a near-UV photosensor. Also catalyzes the transfer of sulfur to the sulfur carrier protein ThiS, forming ThiS-thiocarboxylate. This is a step in the synthesis of thiazole, in the thiamine biosynthesis pathway. The sulfur is donated as persulfide by IscS. This Salmonella agona (strain SL483) protein is tRNA sulfurtransferase.